Here is a 327-residue protein sequence, read N- to C-terminus: tRNA pseudouridine synthase B (327 aa).

Asp69 (nucleophile) is an active-site residue. Residues Tyr97, Tyr201, and Leu222 each coordinate substrate.

It belongs to the pseudouridine synthase TruB family. Type 1 subfamily.

The catalysed reaction is uridine(55) in tRNA = pseudouridine(55) in tRNA. Its function is as follows. Responsible for synthesis of pseudouridine from uracil-55 in the psi GC loop of transfer RNAs. This chain is tRNA pseudouridine synthase B, found in Wigglesworthia glossinidia brevipalpis.